Reading from the N-terminus, the 515-residue chain is Maturase K (515 aa).

Belongs to the intron maturase 2 family. MatK subfamily.

The protein resides in the plastid. It is found in the chloroplast. Its function is as follows. Usually encoded in the trnK tRNA gene intron. Probably assists in splicing its own and other chloroplast group II introns. The sequence is that of Maturase K from Pinus pumila (Dwarf Siberian pine).